The sequence spans 76 residues: Large ribosomal subunit protein eL20 (76 aa).

This sequence belongs to the eukaryotic ribosomal protein eL20 family. Part of the 50S ribosomal subunit. Binds 23S rRNA.

The sequence is that of Large ribosomal subunit protein eL20 from Methanococcus maripaludis (strain C6 / ATCC BAA-1332).